The chain runs to 343 residues: MPIDCKAKCGNRATLKRPKTGDALCKACFFAAFEAEIHHTIISSKLFRRGEKVAVAASGGKDSTVLAHVLKLLNERHDYGLDLVLLSIDEGITGYRDDSLETVKQNRDDYQMPLKILSYEELYGWTMDRIVAQIGRSNNCTFCGVFRRQALDRGAKLLGVDSIATGHNADDIAETVLMNILRGDTARLRRCTDIRTGGSEDSIPRVKPLKYSYEKEIVMYAHYKKLVYFSTECVFAPNAYRGHARAFLKDLEKVRPSVIMDIIYSGEQLRFKDTVKKPVRGICERCSFVSSQQPCKACVLLEGLNRGLPKLGIGKKSKGDRMIAKQNQELALRERANIVKNDF.

The protein belongs to the TtcA family. CTU1/NCS6/ATPBD3 subfamily.

It localises to the cytoplasm. The protein operates within tRNA modification; 5-methoxycarbonylmethyl-2-thiouridine-tRNA biosynthesis. Functionally, plays a central role in 2-thiolation of mcm(5)S(2)U at tRNA wobble positions of tRNA(Lys), tRNA(Glu) and tRNA(Gln). Directly binds tRNAs and probably acts by catalyzing adenylation of tRNAs, an intermediate required for 2-thiolation. It is unclear whether it acts as a sulfurtransferase that transfers sulfur from thiocarboxylated URM1 onto the uridine of tRNAs at wobble position. The protein is Cytoplasmic tRNA 2-thiolation protein 1 of Drosophila virilis (Fruit fly).